Here is a 35-residue protein sequence, read N- to C-terminus: Ranatuerin-2SPb (35 aa).

Cysteine 28 and cysteine 33 form a disulfide bridge.

In terms of tissue distribution, expressed by the skin glands.

The protein resides in the secreted. Functionally, antibacterial activity against Gram-positive bacterium S.aureus. Shows no detectable hemolytic activity towards human erythrocytes. In Lithobates septentrionalis (Mink frog), this protein is Ranatuerin-2SPb.